Here is a 296-residue protein sequence, read N- to C-terminus: Arginase (296 aa).

Residues H98, D124, H126, and D128 each contribute to the Mn(2+) site. The L-arginine site is built by N130, S137, and D178. Mn(2+) contacts are provided by D225 and D227. L-arginine is bound by residues D227 and T239.

It belongs to the arginase family. As to quaternary structure, monomer. Homodimer; dimerization is dispensable for catalytic activity. Mn(2+) serves as cofactor.

It catalyses the reaction L-arginine + H2O = urea + L-ornithine. Its pathway is nitrogen metabolism; urea cycle; L-ornithine and urea from L-arginine: step 1/1. Its activity is regulated as follows. Substitution of the loosely bound surface exposed Mn(2+) with Mg(2+), Zn(2+), Ni(2+) or Co(2+) results in similar catalytic activity, substitution with Cd(2+) and Cu(2+) reduces catalytic activity and substitution with Hg(2+) and Ca(2+) inhibits the enzyme. Inhibited by L-norvaline. Its function is as follows. Catalyzes the hydrolysis of L-arginine into urea and L-ornithine, which is a precursor for polyamine biosynthesis. By depleting host L-arginine, a substrate for nitric oxide synthase (NOS), prevents the production of nitric oxide (NO) by host activated macrophages, and thus allows the parasite to evade host immune response. This is Arginase from Entamoeba histolytica (strain ATCC 30459 / HM-1:IMSS / ABRM).